We begin with the raw amino-acid sequence, 247 residues long: 4-hydroxy-tetrahydrodipicolinate reductase (247 aa).

Residues 12 to 17 (GITGRM), 78 to 80 (GTT), and 102 to 105 (AANF) each bind NAD(+). The Proton donor/acceptor role is filled by His136. His137 is a binding site for (S)-2,3,4,5-tetrahydrodipicolinate. The active-site Proton donor is Lys140. A (S)-2,3,4,5-tetrahydrodipicolinate-binding site is contributed by 146–147 (GT).

The protein belongs to the DapB family.

It is found in the cytoplasm. The catalysed reaction is (S)-2,3,4,5-tetrahydrodipicolinate + NAD(+) + H2O = (2S,4S)-4-hydroxy-2,3,4,5-tetrahydrodipicolinate + NADH + H(+). It carries out the reaction (S)-2,3,4,5-tetrahydrodipicolinate + NADP(+) + H2O = (2S,4S)-4-hydroxy-2,3,4,5-tetrahydrodipicolinate + NADPH + H(+). Its pathway is amino-acid biosynthesis; L-lysine biosynthesis via DAP pathway; (S)-tetrahydrodipicolinate from L-aspartate: step 4/4. Catalyzes the conversion of 4-hydroxy-tetrahydrodipicolinate (HTPA) to tetrahydrodipicolinate. The protein is 4-hydroxy-tetrahydrodipicolinate reductase of Acidiphilium cryptum (strain JF-5).